The primary structure comprises 304 residues: Porphobilinogen deaminase (304 aa).

Cys-240 is subject to S-(dipyrrolylmethanemethyl)cysteine.

It belongs to the HMBS family. In terms of assembly, monomer. It depends on dipyrromethane as a cofactor.

The catalysed reaction is 4 porphobilinogen + H2O = hydroxymethylbilane + 4 NH4(+). It functions in the pathway porphyrin-containing compound metabolism; protoporphyrin-IX biosynthesis; coproporphyrinogen-III from 5-aminolevulinate: step 2/4. In terms of biological role, tetrapolymerization of the monopyrrole PBG into the hydroxymethylbilane pre-uroporphyrinogen in several discrete steps. The chain is Porphobilinogen deaminase from Xanthomonas oryzae pv. oryzae (strain KACC10331 / KXO85).